The chain runs to 206 residues: Protease (206 aa).

Active-site residues include His54, Asp71, and Cys122.

The protein belongs to the peptidase C5 family. As to quaternary structure, interacts with protease cofactor pVI-C; this interaction is necessary for protease activation.

Its subcellular location is the virion. It localises to the host nucleus. The enzyme catalyses Cleaves proteins of the adenovirus and its host cell at two consensus sites: -Yaa-Xaa-Gly-Gly-|-Xaa- and -Yaa-Xaa-Gly-Xaa-|-Gly- (in which Yaa is Met, Ile or Leu, and Xaa is any amino acid).. Requires DNA and protease cofactor for maximal activation. Inside nascent virions, becomes partially activated by binding to the viral DNA, allowing it to cleave the cofactor that binds to the protease and fully activates it. Actin, like the viral protease cofactor, seems to act as a cofactor in the cleavage of cytokeratin 18 and of actin itself. Functionally, cleaves viral precursor proteins (pTP, pIIIa, pVI, pVII, pVIII, and pX) inside newly assembled particles giving rise to mature virions. Protease complexed to its cofactor slides along the viral DNA to specifically locate and cleave the viral precursors. Mature virions have a weakened organization compared to the unmature virions, thereby facilitating subsequent uncoating. Without maturation, the particle lacks infectivity and is unable to uncoat. Late in adenovirus infection, in the cytoplasm, may participate in the cytoskeleton destruction. Cleaves host cell cytoskeletal keratins K7 and K18. The chain is Protease from Homo sapiens (Human).